Consider the following 232-residue polypeptide: MGQKVNPIGLRLGINRNWESRWFPTKQSLPENIGEDYKIRAFLKKKLYYAGISQILIERTAKKLRVTVVAARPGIIIGKKGQDVENLKNEVSKLIGKEVNVNIKEERKAQASAQLAAENVAMQLEKRVAFRRAMKKVIQGAQKSGAKGIKISVAGRLGGAEMARTEWYLEGRVPLHTLRAKIDYGVAEAHTTYGNIGIKVWIFKGEVLQKGVQPEKTEEEAPKKTRRARRGK.

In terms of domain architecture, KH type-2 spans 39-107; it reads IRAFLKKKLY…EVNVNIKEER (69 aa). Residues 211–232 form a disordered region; the sequence is GVQPEKTEEEAPKKTRRARRGK. Positions 213-223 are enriched in basic and acidic residues; the sequence is QPEKTEEEAPK.

It belongs to the universal ribosomal protein uS3 family. In terms of assembly, part of the 30S ribosomal subunit. Forms a tight complex with proteins S10 and S14.

Functionally, binds the lower part of the 30S subunit head. Binds mRNA in the 70S ribosome, positioning it for translation. In Campylobacter concisus (strain 13826), this protein is Small ribosomal subunit protein uS3.